We begin with the raw amino-acid sequence, 291 residues long: ATP synthase gamma chain (291 aa).

It belongs to the ATPase gamma chain family. In terms of assembly, F-type ATPases have 2 components, CF(1) - the catalytic core - and CF(0) - the membrane proton channel. CF(1) has five subunits: alpha(3), beta(3), gamma(1), delta(1), epsilon(1). CF(0) has three main subunits: a, b and c.

Its subcellular location is the cell membrane. Functionally, produces ATP from ADP in the presence of a proton gradient across the membrane. The gamma chain is believed to be important in regulating ATPase activity and the flow of protons through the CF(0) complex. This is ATP synthase gamma chain from Streptococcus pyogenes serotype M49 (strain NZ131).